Consider the following 451-residue polypeptide: Enolase (451 aa).

A (2R)-2-phosphoglycerate-binding site is contributed by Gln-163. Glu-205 acts as the Proton donor in catalysis. The Mg(2+) site is built by Asp-258, Glu-308, and Asp-335. (2R)-2-phosphoglycerate contacts are provided by Lys-360, Arg-389, Ser-390, and Lys-411. Residue Lys-360 is the Proton acceptor of the active site.

It belongs to the enolase family. Mg(2+) serves as cofactor.

The protein localises to the cytoplasm. It localises to the secreted. It is found in the cell surface. The catalysed reaction is (2R)-2-phosphoglycerate = phosphoenolpyruvate + H2O. It functions in the pathway carbohydrate degradation; glycolysis; pyruvate from D-glyceraldehyde 3-phosphate: step 4/5. Its function is as follows. Catalyzes the reversible conversion of 2-phosphoglycerate (2-PG) into phosphoenolpyruvate (PEP). It is essential for the degradation of carbohydrates via glycolysis. The sequence is that of Enolase from Mycoplasma capricolum subsp. capricolum (strain California kid / ATCC 27343 / NCTC 10154).